We begin with the raw amino-acid sequence, 2155 residues long: Alpha-tectorin (2155 aa).

The N-terminal stretch at 1 to 24 (MNYSSLLRIWVSFIFALVRHQAQP) is a signal peptide. Residues Asn-34, Asn-187, Asn-215, Asn-278, Asn-455, Asn-506, Asn-528, and Asn-560 are each glycosylated (N-linked (GlcNAc...) asparagine). The region spanning 98-252 (PFWADVHNGI…GRWAFKVDGK (155 aa)) is the NIDO domain. The VWFC domain occupies 260-314 (CTSRGQFLRRGEVFWDDLNCTIKCRCLDFNNEIYCQEASCSPYEVCEPKGRFFYC). Residues 320–500 (STCVVFGEPH…RVYHADWKCG (181 aa)) form the VWFD 1 domain. 2 cysteine pairs are disulfide-bonded: Cys-322–Cys-461 and Cys-344–Cys-499. The TIL 1 domain occupies 597–650 (CPSFSHYSVCTSSCPDTCSDLTASQNCATPCTEGCECNEGFVLSTSQCVPLHKC). Residues Asn-670, Asn-687, Asn-813, Asn-843, Asn-855, Asn-898, Asn-920, Asn-931, and Asn-949 are each glycosylated (N-linked (GlcNAc...) asparagine). In terms of domain architecture, VWFD 2 spans 711 to 886 (TVCLLSQNQV…SWTTFEEICN (176 aa)). Cys-713 and Cys-849 are oxidised to a cystine. The TIL 2 domain occupies 984 to 1036 (CPENSHFEECMTCTETCETLALGPICVDSCSEGCQCDEGYALQGSQCVPRSEC). 4 N-linked (GlcNAc...) asparagine glycosylation sites follow: Asn-1048, Asn-1064, Asn-1235, and Asn-1364. Residues 1098 to 1278 (ASCIVSGYGH…SWVKRDTFCQ (181 aa)) form the VWFD 3 domain. Disulfide bonds link Cys-1100–Cys-1241 and Cys-1122–Cys-1277. The region spanning 1372 to 1425 (CPPNSHYESCVSVCQPRCAAIRLKSDCNHYCVEGCQCDAGYVLNGKSCILPHNC) is the TIL 3 domain. Residues 1485-1666 (SYCLAAGGGV…QKRPLAPSCN (182 aa)) form the VWFD 4 domain. Disulfide bonds link Cys-1487–Cys-1622, Cys-1509–Cys-1665, Cys-1717–Cys-1775, Cys-1741–Cys-1784, Cys-1786–Cys-1818, Cys-1806–Cys-1898, and Cys-1837–Cys-1857. N-linked (GlcNAc...) asparagine glycosylation is found at Asn-1538, Asn-1565, Asn-1756, Asn-1772, Asn-1794, Asn-1851, Asn-1864, Asn-1880, Asn-1920, and Asn-1939. A ZP domain is found at 1805–2059 (TCKAAQMEVS…YSCKINCPQN (255 aa)). 3 cysteine pairs are disulfide-bonded: Cys-1980/Cys-2040, Cys-2001/Cys-2056, and Cys-2045/Cys-2052. Asn-2091 carries the GPI-anchor amidated asparagine lipid modification. Positions 2092 to 2155 (GGCEQICTSR…HLIYKSGATS (64 aa)) are cleaved as a propeptide — removed in mature form.

As to quaternary structure, may form homomeric filament after self-association or heteromeric filament after association with beta-tectorin. Interacts with CEACAM16. 3 products of tectorin seem to exist: HMM, MMM and LMM. They may be generated by active processing or the result of proteolysis occurring between intrachain disulfide bonds. In terms of processing, the presence of a hydrophobic C-terminus preceded by a potential cleavage site strongly suggests that tectorins are synthesized as glycosylphosphatidylinositol-linked, membrane-bound precursors. Tectorins are targeted to the apical surface of the inner ear epithelia by the lipid and proteolytically released into the extracellular compartment. As to expression, cochlea-specific.

The protein resides in the cell membrane. It localises to the secreted. Its subcellular location is the extracellular space. The protein localises to the extracellular matrix. One of the major non-collagenous components of the tectorial membrane. The tectorial membrane is an extracellular matrix of the inner ear that covers the neuroepithelium of the cochlea and contacts the stereocilia bundles of specialized sensory hair cells. Sound induces movement of these hair cells relative to the tectorial membrane, deflects the stereocilia and leads to fluctuations in hair-cell membrane potential, transducing sound into electrical signals. In Mus musculus (Mouse), this protein is Alpha-tectorin (Tecta).